The primary structure comprises 196 residues: Large ribosomal subunit protein uL10 (196 aa).

The disordered stretch occupies residues 163–196; the sequence is GAPAAAEAPAAEEAPAAEAAETEAPAEAAATEEN. Over residues 164–196 the composition is skewed to low complexity; it reads APAAAEAPAAEEAPAAEAAETEAPAEAAATEEN.

This sequence belongs to the universal ribosomal protein uL10 family. In terms of assembly, part of the ribosomal stalk of the 50S ribosomal subunit. The N-terminus interacts with L11 and the large rRNA to form the base of the stalk. The C-terminus forms an elongated spine to which L12 dimers bind in a sequential fashion forming a multimeric L10(L12)X complex.

Forms part of the ribosomal stalk, playing a central role in the interaction of the ribosome with GTP-bound translation factors. The protein is Large ribosomal subunit protein uL10 of Arthrobacter sp. (strain FB24).